The sequence spans 202 residues: Small ribosomal subunit protein uS4c (202 aa).

The S4 RNA-binding domain occupies 90 to 153 (MRLDNIIFRL…KSQAIISKNI (64 aa)).

Belongs to the universal ribosomal protein uS4 family. As to quaternary structure, part of the 30S ribosomal subunit. Contacts protein S5. The interaction surface between S4 and S5 is involved in control of translational fidelity.

Its subcellular location is the plastid. It localises to the chloroplast. In terms of biological role, one of the primary rRNA binding proteins, it binds directly to 16S rRNA where it nucleates assembly of the body of the 30S subunit. With S5 and S12 plays an important role in translational accuracy. This chain is Small ribosomal subunit protein uS4c (rps4), found in Splachnum sphaericum (Pinkstink dung moss).